A 179-amino-acid chain; its full sequence is Ribosome-recycling factor (179 aa).

The protein belongs to the RRF family.

The protein localises to the cytoplasm. Its function is as follows. Responsible for the release of ribosomes from messenger RNA at the termination of protein biosynthesis. May increase the efficiency of translation by recycling ribosomes from one round of translation to another. This is Ribosome-recycling factor from Chlamydia trachomatis serovar A (strain ATCC VR-571B / DSM 19440 / HAR-13).